We begin with the raw amino-acid sequence, 65 residues long: Conotoxin Cal16.1 (65 aa).

A signal peptide spans 1–19 (MRCLSIFVLLVLLVSFAVA). A propeptide spanning residues 20-48 (ELDVEGEIVKQLLTRGTLKDADFWKRLEM) is cleaved from the precursor. Q49 is modified (pyrrolidone carboxylic acid). 2 disulfides stabilise this stretch: C51–C60 and C53–C61. Glutamic acid 1-amide is present on E63.

In terms of tissue distribution, expressed by the venom duct.

The protein resides in the secreted. Its function is as follows. Probable neurotoxin with unknown target. Possibly targets ion channels. This is Conotoxin Cal16.1 from Californiconus californicus (California cone).